The following is a 171-amino-acid chain: Myosin regulatory light chain 12A (171 aa).

Thr-18 carries the post-translational modification Phosphothreonine; by MLCK. At Ser-19 the chain carries Phosphoserine; by MLCK. 3 EF-hand domains span residues 28 to 63 (SQIQ…LGKN), 97 to 132 (DPED…MGDR), and 133 to 168 (FTDE…GAKD). Ca(2+)-binding residues include Asp-41, Asn-43, Asp-45, and Asp-52.

Myosin is a hexamer of 2 heavy chains and 4 light chains. In terms of processing, phosphorylation increases the actin-activated myosin ATPase activity and thereby regulates the contractile activity. It is required to generate the driving force in the migration of the cells but not necessary for localization of myosin-2 at the leading edge.

Myosin regulatory subunit that plays an important role in regulation of both smooth muscle and nonmuscle cell contractile activity via its phosphorylation. Implicated in cytokinesis, receptor capping, and cell locomotion. This is Myosin regulatory light chain 12A (MYL12A) from Homo sapiens (Human).